The sequence spans 180 residues: Centromere protein M (180 aa).

It localises to the nucleus. The protein resides in the chromosome. It is found in the centromere. In terms of biological role, probable component of a centromeric complex involved in assembly of kinetochore proteins, mitotic progression and chromosome segregation. The polypeptide is Centromere protein M (cenpm) (Xenopus laevis (African clawed frog)).